Consider the following 193-residue polypeptide: Peptidyl-tRNA hydrolase (193 aa).

H17 lines the tRNA pocket. H22 serves as the catalytic Proton acceptor. TRNA contacts are provided by F68, N70, and N116.

The protein belongs to the PTH family. Monomer.

The protein localises to the cytoplasm. The enzyme catalyses an N-acyl-L-alpha-aminoacyl-tRNA + H2O = an N-acyl-L-amino acid + a tRNA + H(+). Hydrolyzes ribosome-free peptidyl-tRNAs (with 1 or more amino acids incorporated), which drop off the ribosome during protein synthesis, or as a result of ribosome stalling. In terms of biological role, catalyzes the release of premature peptidyl moieties from peptidyl-tRNA molecules trapped in stalled 50S ribosomal subunits, and thus maintains levels of free tRNAs and 50S ribosomes. This is Peptidyl-tRNA hydrolase from Xanthomonas euvesicatoria pv. vesicatoria (strain 85-10) (Xanthomonas campestris pv. vesicatoria).